The primary structure comprises 709 residues: Alpha-1,2-mannosyltransferase MNN24 (709 aa).

Residues Met1 to Lys9 lie on the Cytoplasmic side of the membrane. A helical membrane pass occupies residues Thr10 to Phe30. Topologically, residues Gln31 to Ser709 are extracellular. Residue Asn317 is glycosylated (N-linked (GlcNAc...) asparagine).

Belongs to the MNN1/MNT family.

It is found in the golgi apparatus membrane. It functions in the pathway protein modification; protein glycosylation. Its function is as follows. Alpha-1,2-mannosyltransferase required for cell wall integrity. Responsible for addition of the first alpha-1,2-linked mannose to form the branches on the mannan backbone of oligosaccharides. Addition of alpha-1,2-mannose is required for stabilization of the alpha-1,6-mannose backbone and hence regulates mannan fibril length; and is important for both immune recognition and virulence. The chain is Alpha-1,2-mannosyltransferase MNN24 (MNN24) from Candida albicans (strain SC5314 / ATCC MYA-2876) (Yeast).